The sequence spans 201 residues: CDP-diacylglycerol--serine O-phosphatidyltransferase (201 aa).

6 helical membrane-spanning segments follow: residues 19–39, 57–77, 88–108, 112–132, 133–153, and 162–182; these read IITG…LSII, FGAE…PAYL, LISA…FGIL, GFIG…CQLI, NSYL…ISDI, and IFIY…PHFA.

This sequence belongs to the CDP-alcohol phosphatidyltransferase class-I family.

Its subcellular location is the cell membrane. It carries out the reaction a CDP-1,2-diacyl-sn-glycerol + L-serine = a 1,2-diacyl-sn-glycero-3-phospho-L-serine + CMP + H(+). The sequence is that of CDP-diacylglycerol--serine O-phosphatidyltransferase (pssA) from Methanocaldococcus jannaschii (strain ATCC 43067 / DSM 2661 / JAL-1 / JCM 10045 / NBRC 100440) (Methanococcus jannaschii).